A 184-amino-acid polypeptide reads, in one-letter code: UPF0149 protein PputW619_5026 (184 aa).

The protein belongs to the UPF0149 family.

The polypeptide is UPF0149 protein PputW619_5026 (Pseudomonas putida (strain W619)).